The following is a 227-amino-acid chain: Phosphoglycolate phosphatase (227 aa).

The active-site Nucleophile is the Asp9. Mg(2+) contacts are provided by Asp9, Asp11, and Asp171.

It belongs to the HAD-like hydrolase superfamily. CbbY/CbbZ/Gph/YieH family. It depends on Mg(2+) as a cofactor.

The catalysed reaction is 2-phosphoglycolate + H2O = glycolate + phosphate. The protein operates within organic acid metabolism; glycolate biosynthesis; glycolate from 2-phosphoglycolate: step 1/1. Specifically catalyzes the dephosphorylation of 2-phosphoglycolate. Is involved in the dissimilation of the intracellular 2-phosphoglycolate formed during the DNA repair of 3'-phosphoglycolate ends, a major class of DNA lesions induced by oxidative stress. This is Phosphoglycolate phosphatase from Mesorhizobium japonicum (strain LMG 29417 / CECT 9101 / MAFF 303099) (Mesorhizobium loti (strain MAFF 303099)).